We begin with the raw amino-acid sequence, 57 residues long: Large ribosomal subunit protein bL32c (57 aa).

It belongs to the bacterial ribosomal protein bL32 family.

It is found in the plastid. The protein resides in the chloroplast. The protein is Large ribosomal subunit protein bL32c of Nandina domestica (Heavenly bamboo).